Reading from the N-terminus, the 83-residue chain is Cytochrome b559 subunit alpha (83 aa).

A helical membrane pass occupies residues 21-35 (VIHSITIPSLFIAGW). Position 23 (His-23) interacts with heme.

Belongs to the PsbE/PsbF family. In terms of assembly, heterodimer of an alpha subunit and a beta subunit. PSII is composed of 1 copy each of membrane proteins PsbA, PsbB, PsbC, PsbD, PsbE, PsbF, PsbH, PsbI, PsbJ, PsbK, PsbL, PsbM, PsbT, PsbX, PsbY, PsbZ, Psb30/Ycf12, at least 3 peripheral proteins of the oxygen-evolving complex and a large number of cofactors. It forms dimeric complexes. The cofactor is heme b.

It is found in the plastid. The protein resides in the chloroplast thylakoid membrane. In terms of biological role, this b-type cytochrome is tightly associated with the reaction center of photosystem II (PSII). PSII is a light-driven water:plastoquinone oxidoreductase that uses light energy to abstract electrons from H(2)O, generating O(2) and a proton gradient subsequently used for ATP formation. It consists of a core antenna complex that captures photons, and an electron transfer chain that converts photonic excitation into a charge separation. The chain is Cytochrome b559 subunit alpha from Oenothera berteroana (Bertero's evening primrose).